The primary structure comprises 442 residues: 3-phosphoshikimate 1-carboxyvinyltransferase (442 aa).

The 3-phosphoshikimate site is built by Lys25, Ser26, and Arg30. Position 25 (Lys25) interacts with phosphoenolpyruvate. Residues Gly96 and Arg124 each contribute to the phosphoenolpyruvate site. 6 residues coordinate 3-phosphoshikimate: Ser171, Ser172, Gln173, Ser203, Asp325, and Lys352. Phosphoenolpyruvate is bound at residue Gln173. The Proton acceptor role is filled by Asp325. 3 residues coordinate phosphoenolpyruvate: Arg356, Arg400, and Lys425.

It belongs to the EPSP synthase family. In terms of assembly, monomer.

The protein localises to the cytoplasm. The enzyme catalyses 3-phosphoshikimate + phosphoenolpyruvate = 5-O-(1-carboxyvinyl)-3-phosphoshikimate + phosphate. The protein operates within metabolic intermediate biosynthesis; chorismate biosynthesis; chorismate from D-erythrose 4-phosphate and phosphoenolpyruvate: step 6/7. Functionally, catalyzes the transfer of the enolpyruvyl moiety of phosphoenolpyruvate (PEP) to the 5-hydroxyl of shikimate-3-phosphate (S3P) to produce enolpyruvyl shikimate-3-phosphate and inorganic phosphate. In Bordetella parapertussis (strain 12822 / ATCC BAA-587 / NCTC 13253), this protein is 3-phosphoshikimate 1-carboxyvinyltransferase.